Here is a 373-residue protein sequence, read N- to C-terminus: Putative F-box protein At1g76830 (373 aa).

In terms of domain architecture, F-box spans 4–49 (ITSFENLPEELKREILLRMSPNSLVTCSRVSKKLASMIRTKSFKEL).

The chain is Putative F-box protein At1g76830 from Arabidopsis thaliana (Mouse-ear cress).